An 888-amino-acid chain; its full sequence is Leucine--tRNA ligase (888 aa).

The short motif at 43–53 (PYPSGRIHMGH) is the 'HIGH' region element. The short motif at 644 to 648 (KMSKS) is the 'KMSKS' region element. K647 provides a ligand contact to ATP.

This sequence belongs to the class-I aminoacyl-tRNA synthetase family.

The protein resides in the cytoplasm. It catalyses the reaction tRNA(Leu) + L-leucine + ATP = L-leucyl-tRNA(Leu) + AMP + diphosphate. The sequence is that of Leucine--tRNA ligase from Rhodopseudomonas palustris (strain BisA53).